Here is a 578-residue protein sequence, read N- to C-terminus: Arginine--tRNA ligase (578 aa).

Residues 122–132 (PNVAKEMHVGH) carry the 'HIGH' region motif.

Belongs to the class-I aminoacyl-tRNA synthetase family. In terms of assembly, monomer.

The protein localises to the cytoplasm. It carries out the reaction tRNA(Arg) + L-arginine + ATP = L-arginyl-tRNA(Arg) + AMP + diphosphate. The sequence is that of Arginine--tRNA ligase from Shigella sonnei (strain Ss046).